Here is a 469-residue protein sequence, read N- to C-terminus: Sorting and assembly machinery component 50 homolog (469 aa).

Residues 45–125 (VVVQHVHFDG…LDVTFEVTEL (81 aa)) enclose the POTRA domain. At Lys-255 the chain carries N6-methyllysine.

It belongs to the SAM50/omp85 family. Associates with the mitochondrial contact site and cristae organizing system (MICOS) complex, composed of at least MICOS10/MIC10, CHCHD3/MIC19, CHCHD6/MIC25, APOOL/MIC27, IMMT/MIC60, APOO/MIC23/MIC26 and QIL1/MIC13. This complex was also known under the names MINOS or MitOS complex. The MICOS complex associates with mitochondrial outer membrane proteins SAMM50, MTX1 and MTX2 (together described as components of the mitochondrial outer membrane sorting assembly machinery (SAM) complex) and DNAJC11, mitochondrial inner membrane protein TMEM11 and with HSPA9. The MICOS and SAM complexes together with DNAJC11 are part of a large protein complex spanning both membranes termed the mitochondrial intermembrane space bridging (MIB) complex. Interacts with IMMT/MIC60. Interacts with CHCHD3/MIC19. Interacts with ARMC1. As to quaternary structure, (Microbial infection) Interacts with parasite T.gondii RH strain MAF1b1; the interaction is probably indirect and results in the disruption of the MIB complex and the formation of SPOTs (structures positive for outer mitochondrial membrane (OMM)), a cellular response to OMM stress, which leads to the constitutive shedding of OMM vesicles.

Its subcellular location is the mitochondrion outer membrane. It localises to the cytoplasm. The protein localises to the mitochondrion. Functionally, plays a crucial role in the maintenance of the structure of mitochondrial cristae and the proper assembly of the mitochondrial respiratory chain complexes. Required for the assembly of TOMM40 into the TOM complex. The sequence is that of Sorting and assembly machinery component 50 homolog (Samm50) from Mus musculus (Mouse).